Here is a 72-residue protein sequence, read N- to C-terminus: Toxin Cll8 (72 aa).

The first 4 residues, 1 to 4 (TVSA), serve as a signal peptide directing secretion. Positions 5–70 (KEGYLVKKSN…TWPLPNKSCG (66 aa)) constitute an LCN-type CS-alpha/beta domain. 4 cysteine pairs are disulfide-bonded: cysteine 16–cysteine 69, cysteine 20–cysteine 45, cysteine 29–cysteine 50, and cysteine 33–cysteine 52. Cysteine 69 bears the Cysteine amide mark.

This sequence belongs to the long (4 C-C) scorpion toxin superfamily. Sodium channel inhibitor family. Beta subfamily. As to expression, expressed by the venom gland.

The protein resides in the secreted. Its function is as follows. Beta toxins bind voltage-independently at site-4 of sodium channels (Nav) and shift the voltage of activation toward more negative potentials thereby affecting sodium channel activation and promoting spontaneous and repetitive firing. This chain is Toxin Cll8, found in Centruroides limpidus (Mexican scorpion).